Consider the following 716-residue polypeptide: Probable glutamate--tRNA ligase, cytoplasmic (716 aa).

Serine 190 carries the post-translational modification Phosphoserine. 210 to 212 contacts L-glutamate; sequence RFP. The short motif at 215 to 224 is the 'HIGH' region element; sequence PSGYLHIGHA. Histidine 220 serves as a coordination point for ATP. L-glutamate-binding positions include aspartate 246, 386–390, and arginine 404; that span reads YDFAC. ATP-binding positions include glutamate 407 and 441–445; that span reads LLSKR. The 'KMSKS' region signature appears at 441-445; sequence LLSKR.

This sequence belongs to the class-I aminoacyl-tRNA synthetase family. Glutamate--tRNA ligase type 2 subfamily. In terms of assembly, component of a yeast aminoacyl-tRNA synthase (aaRS) complex formed by methionyl-tRNA synthase, glutamyl-tRNA synthase and the tRNA aminoacylation cofactor arc1 in a stoichiometric complex. Interacts with arc1/SPAC30C2.04.

The protein resides in the cytoplasm. The protein localises to the nucleus. It catalyses the reaction tRNA(Glu) + L-glutamate + ATP = L-glutamyl-tRNA(Glu) + AMP + diphosphate. Functionally, catalyzes the attachment of glutamate to tRNA(Glu) in a two-step reaction: glutamate is first activated by ATP to form Glu-AMP and then transferred to the acceptor end of tRNA(Glu). The polypeptide is Probable glutamate--tRNA ligase, cytoplasmic (gus1) (Schizosaccharomyces pombe (strain 972 / ATCC 24843) (Fission yeast)).